A 147-amino-acid chain; its full sequence is uncharacterized protein (147 aa).

This is an uncharacterized protein from Acidianus convivator (ATV).